A 269-amino-acid chain; its full sequence is 3-methyl-2-oxobutanoate hydroxymethyltransferase (269 aa).

Residues Asp-50 and Asp-89 each coordinate Mg(2+). Residues 50-51 (DS), Asp-89, and Lys-119 each bind 3-methyl-2-oxobutanoate. Glu-121 serves as a coordination point for Mg(2+). Catalysis depends on Glu-187, which acts as the Proton acceptor.

It belongs to the PanB family. In terms of assembly, homodecamer; pentamer of dimers. Mg(2+) serves as cofactor.

The protein resides in the cytoplasm. It carries out the reaction 3-methyl-2-oxobutanoate + (6R)-5,10-methylene-5,6,7,8-tetrahydrofolate + H2O = 2-dehydropantoate + (6S)-5,6,7,8-tetrahydrofolate. Its pathway is cofactor biosynthesis; (R)-pantothenate biosynthesis; (R)-pantoate from 3-methyl-2-oxobutanoate: step 1/2. In terms of biological role, catalyzes the reversible reaction in which hydroxymethyl group from 5,10-methylenetetrahydrofolate is transferred onto alpha-ketoisovalerate to form ketopantoate. This is 3-methyl-2-oxobutanoate hydroxymethyltransferase from Corynebacterium efficiens (strain DSM 44549 / YS-314 / AJ 12310 / JCM 11189 / NBRC 100395).